The following is a 208-amino-acid chain: Imidazole glycerol phosphate synthase subunit HisH (208 aa).

The region spanning 2–208 is the Glutamine amidotransferase type-1 domain; it reads NVTIVDYNSG…LKIIENFLNL (207 aa). Cys-85 functions as the Nucleophile in the catalytic mechanism. Residues His-190 and Glu-192 contribute to the active site.

In terms of assembly, heterodimer of HisH and HisF.

Its subcellular location is the cytoplasm. The catalysed reaction is 5-[(5-phospho-1-deoxy-D-ribulos-1-ylimino)methylamino]-1-(5-phospho-beta-D-ribosyl)imidazole-4-carboxamide + L-glutamine = D-erythro-1-(imidazol-4-yl)glycerol 3-phosphate + 5-amino-1-(5-phospho-beta-D-ribosyl)imidazole-4-carboxamide + L-glutamate + H(+). It catalyses the reaction L-glutamine + H2O = L-glutamate + NH4(+). The protein operates within amino-acid biosynthesis; L-histidine biosynthesis; L-histidine from 5-phospho-alpha-D-ribose 1-diphosphate: step 5/9. IGPS catalyzes the conversion of PRFAR and glutamine to IGP, AICAR and glutamate. The HisH subunit catalyzes the hydrolysis of glutamine to glutamate and ammonia as part of the synthesis of IGP and AICAR. The resulting ammonia molecule is channeled to the active site of HisF. The sequence is that of Imidazole glycerol phosphate synthase subunit HisH from Pelagibacter ubique (strain HTCC1062).